The chain runs to 365 residues: Glial fibrillary acidic protein (365 aa).

The tract at residues 1-5 (REVDR) is head. An IF rod domain is found at 2-310 (EVDRVMGLND…KLLEGEESRI (309 aa)). The segment at 6 to 37 (VMGLNDRFASYIEKVRFLEQQNKMLVAELNQL) is coil 1A. The linker 1 stretch occupies residues 38–48 (RGKEPSRLGDI). The tract at residues 49–147 (YQEELRELRR…EEEMRQLQEQ (99 aa)) is coil 1B. Residues 148–163 (LIAQQVHVDLDVSKPD) form a linker 12 region. Residues 164-185 (LTTALKEIRAQFEAMATSNMQE) are coil 2A. The interval 186 to 189 (TEEW) is linker 2. A coil 2B region spans residues 190 to 310 (YRSKFADLTD…KLLEGEESRI (121 aa)). The segment at 311–365 (TVPVQNFTNLQFRDTSLDTKLTPEAHVKRSIVVRTVETRDGEIIKESTTERKDLP) is tail.

The protein belongs to the intermediate filament family.

The sequence is that of Glial fibrillary acidic protein (gfap) from Carassius auratus (Goldfish).